The following is a 95-amino-acid chain: UPF0358 protein GK1077 (95 aa).

The protein belongs to the UPF0358 family.

In Geobacillus kaustophilus (strain HTA426), this protein is UPF0358 protein GK1077.